The sequence spans 214 residues: Cytochrome b (214 aa).

4 helical membrane-spanning segments follow: residues 31–51, 75–96, 111–131, and 176–196; these read FGSMLLSCSMIQIMTGFFLAI, WIMQNTHAIGASLFFICIYIHI, WLSGTTLLIILMATAFFGYVL, and FFALHFILPFAIISMSSIHIL. Heme b-binding residues include histidine 81 and histidine 95. Positions 180 and 194 each coordinate heme b. Histidine 199 serves as a coordination point for a ubiquinone.

The protein belongs to the cytochrome b family. The cytochrome bc1 complex contains 3 respiratory subunits (MT-CYB, CYC1 and UQCRFS1), 2 core proteins (UQCRC1 and UQCRC2) and probably 6 low-molecular weight proteins. Heme b serves as cofactor.

It is found in the mitochondrion inner membrane. In terms of biological role, component of the ubiquinol-cytochrome c reductase complex (complex III or cytochrome b-c1 complex) that is part of the mitochondrial respiratory chain. The b-c1 complex mediates electron transfer from ubiquinol to cytochrome c. Contributes to the generation of a proton gradient across the mitochondrial membrane that is then used for ATP synthesis. This is Cytochrome b (MT-CYB) from Trimeresurus stejnegeri (Chinese green tree viper).